Here is a 121-residue protein sequence, read N- to C-terminus: Large ribosomal subunit protein bL12 (121 aa).

The protein belongs to the bacterial ribosomal protein bL12 family. As to quaternary structure, homodimer. Part of the ribosomal stalk of the 50S ribosomal subunit. Forms a multimeric L10(L12)X complex, where L10 forms an elongated spine to which 2 to 4 L12 dimers bind in a sequential fashion. Binds GTP-bound translation factors.

In terms of biological role, forms part of the ribosomal stalk which helps the ribosome interact with GTP-bound translation factors. Is thus essential for accurate translation. This Aeromonas hydrophila subsp. hydrophila (strain ATCC 7966 / DSM 30187 / BCRC 13018 / CCUG 14551 / JCM 1027 / KCTC 2358 / NCIMB 9240 / NCTC 8049) protein is Large ribosomal subunit protein bL12.